A 185-amino-acid chain; its full sequence is Threonylcarbamoyl-AMP synthase (185 aa).

One can recognise a YrdC-like domain in the interval 1–185 (MDNFEQVLNA…AKTSQILRQG (185 aa)). The interval 163-185 (ETSGRDKPSEIRDAKTSQILRQG) is disordered. A compositionally biased stretch (basic and acidic residues) spans 164 to 177 (TSGRDKPSEIRDAK).

It belongs to the SUA5 family. TsaC subfamily.

The protein resides in the cytoplasm. It catalyses the reaction L-threonine + hydrogencarbonate + ATP = L-threonylcarbamoyladenylate + diphosphate + H2O. Required for the formation of a threonylcarbamoyl group on adenosine at position 37 (t(6)A37) in tRNAs that read codons beginning with adenine. Catalyzes the conversion of L-threonine, HCO(3)(-)/CO(2) and ATP to give threonylcarbamoyl-AMP (TC-AMP) as the acyladenylate intermediate, with the release of diphosphate. The chain is Threonylcarbamoyl-AMP synthase from Vibrio parahaemolyticus serotype O3:K6 (strain RIMD 2210633).